A 288-amino-acid chain; its full sequence is Polyketide biosynthesis malonyl CoA-acyl carrier protein transacylase PksC (288 aa).

Catalysis depends on residues S87 and H193.

Belongs to the FabD family.

It is found in the cytoplasm. The enzyme catalyses holo-[ACP] + malonyl-CoA = malonyl-[ACP] + CoA. It participates in antibiotic biosynthesis; bacillaene biosynthesis. Functionally, involved in some intermediate steps for the synthesis of the antibiotic polyketide bacillaene which is involved in secondary metabolism. It catalyzes the transfer of the malonyl-CoA group to the acyl-carrier-protein AcpK (Mal-AcpK). This chain is Polyketide biosynthesis malonyl CoA-acyl carrier protein transacylase PksC (pksC), found in Bacillus subtilis (strain 168).